A 277-amino-acid chain; its full sequence is Nickel transport system permease protein NikC (277 aa).

Topologically, residues 1–12 are cytoplasmic; sequence MNFFLSSRWSVR. A helical membrane pass occupies residues 13–33; it reads LALIIIALLALIALTSQWWLP. The Periplasmic portion of the chain corresponds to 34-78; the sequence is YDPQAIDLPSRLLSPDAQHWLGTDHLGRDIFSRLMAATRVSLGSV. The ABC transmembrane type-1 domain maps to 67–260; the sequence is LMAATRVSLG…ISVMAFNLVG (194 aa). Residues 79–99 form a helical membrane-spanning segment; that stretch reads MACLLLVLTLGLVIGGSAGLI. Topologically, residues 100–120 are cytoplasmic; that stretch reads GGRVDQATMRVADMFMTFPTS. The chain crosses the membrane as a helical span at residues 121-141; it reads ILSFFMVGVLGTGLTNVIIAI. The Periplasmic portion of the chain corresponds to 142–183; it reads ALSHWAWYARMVRSLVISLRQREFVLASRLSGAGHVRVFVDH. The chain crosses the membrane as a helical span at residues 184 to 204; it reads LAGAVIPSLLVLATLDIGHMM. Residues 205-207 are Cytoplasmic-facing; that stretch reads LHV. A helical membrane pass occupies residues 208-228; it reads AGMSFLGLGVTAPTAEWGVMI. Over 229–239 the chain is Periplasmic; that stretch reads NDARQYIWTQP. The chain crosses the membrane as a helical span at residues 240-260; sequence LQMFWPGLALFISVMAFNLVG. Residues 261 to 277 are Cytoplasmic-facing; it reads DALRDHLDPHLVTEHAH.

It belongs to the binding-protein-dependent transport system permease family. OppBC subfamily. Probably forms a heterodimeric pore with NikB.

The protein resides in the cell inner membrane. Involved in a nickel transport system, probably translocates nickel through the bacterial inner membrane. In Escherichia coli O157:H7, this protein is Nickel transport system permease protein NikC (nikC).